We begin with the raw amino-acid sequence, 298 residues long: Bifunctional protein FolD (298 aa).

NADP(+) contacts are provided by residues 166-168 (GRS), serine 195, and isoleucine 236.

The protein belongs to the tetrahydrofolate dehydrogenase/cyclohydrolase family. As to quaternary structure, homodimer.

The catalysed reaction is (6R)-5,10-methylene-5,6,7,8-tetrahydrofolate + NADP(+) = (6R)-5,10-methenyltetrahydrofolate + NADPH. It catalyses the reaction (6R)-5,10-methenyltetrahydrofolate + H2O = (6R)-10-formyltetrahydrofolate + H(+). It functions in the pathway one-carbon metabolism; tetrahydrofolate interconversion. In terms of biological role, catalyzes the oxidation of 5,10-methylenetetrahydrofolate to 5,10-methenyltetrahydrofolate and then the hydrolysis of 5,10-methenyltetrahydrofolate to 10-formyltetrahydrofolate. The protein is Bifunctional protein FolD of Chlorobium phaeobacteroides (strain BS1).